Here is a 152-residue protein sequence, read N- to C-terminus: SsrA-binding protein (152 aa).

It belongs to the SmpB family.

Its subcellular location is the cytoplasm. Required for rescue of stalled ribosomes mediated by trans-translation. Binds to transfer-messenger RNA (tmRNA), required for stable association of tmRNA with ribosomes. tmRNA and SmpB together mimic tRNA shape, replacing the anticodon stem-loop with SmpB. tmRNA is encoded by the ssrA gene; the 2 termini fold to resemble tRNA(Ala) and it encodes a 'tag peptide', a short internal open reading frame. During trans-translation Ala-aminoacylated tmRNA acts like a tRNA, entering the A-site of stalled ribosomes, displacing the stalled mRNA. The ribosome then switches to translate the ORF on the tmRNA; the nascent peptide is terminated with the 'tag peptide' encoded by the tmRNA and targeted for degradation. The ribosome is freed to recommence translation, which seems to be the essential function of trans-translation. In Rickettsia felis (strain ATCC VR-1525 / URRWXCal2) (Rickettsia azadi), this protein is SsrA-binding protein.